The primary structure comprises 343 residues: Pseudaminic acid synthase (343 aa).

In terms of domain architecture, AFP-like spans 287–343 (SLYASKDIKKGEMFSEENVKSVRPSFGLHPKFYQELLGKKASKDIKFGDALKQGDFQ).

It belongs to the pseudaminic acid synthase family. The cofactor is a divalent metal cation.

It carries out the reaction 2,4-diacetamido-2,4,6-trideoxy-beta-L-altrose + phosphoenolpyruvate + H2O = pseudaminate + phosphate. In terms of biological role, catalyzes the fifth step in the biosynthesis of pseudaminic acid, a sialic-acid-like sugar that is used to modify flagellin. Catalyzes the condensation of phosphoenolpyruvate with 2,4-diacetamido-2,4,6-trideoxy-beta-l-altropyranose, forming pseudaminic acid. This is Pseudaminic acid synthase (pseI) from Campylobacter jejuni subsp. jejuni serotype O:2 (strain ATCC 700819 / NCTC 11168).